A 387-amino-acid chain; its full sequence is GDSL esterase/lipase At2g23540 (387 aa).

Positions 1-32 (MATRASTSSRVSPAFTFLVIFFLLSLTASVEA) are cleaved as a signal peptide. Residue S55 is the Nucleophile of the active site. N-linked (GlcNAc...) asparagine glycosylation is found at N139 and N159. Residues D352 and H355 contribute to the active site. N380 carries an N-linked (GlcNAc...) asparagine glycan.

Belongs to the 'GDSL' lipolytic enzyme family.

Its subcellular location is the secreted. The sequence is that of GDSL esterase/lipase At2g23540 from Arabidopsis thaliana (Mouse-ear cress).